The primary structure comprises 568 residues: Fumarate hydratase 2 (568 aa).

Residue Cys-133 coordinates [4Fe-4S] cluster. Residues 134 to 135, Arg-173, Gly-216, and 219 to 225 each bind (S)-malate; these read QD and NKAYLYQ. [4Fe-4S] cluster is bound by residues Cys-252 and Cys-346. (S)-malate is bound by residues Arg-421, 467–471, and Lys-491; that span reads TTAGR.

This sequence belongs to the class-I fumarase family. As to quaternary structure, homodimer. The cofactor is [4Fe-4S] cluster.

It localises to the cytoplasm. It is found in the cytosol. It carries out the reaction (S)-malate = fumarate + H2O. With respect to regulation, specifically and competitively inhibited by 2-thiomalate, which coordinates with the catalytic [4Fe-4S] cluster. Weakly inhibited by malonate. Its function is as follows. Cytosolic fumarate hydratase that catalyzes the reversible hydration of fumarate to (S)-malate. The chain is Fumarate hydratase 2 from Leishmania major.